The following is a 21-amino-acid chain: Trypsin (21 aa).

Residues 1–7 (FPIEEDK) constitute a propeptide, activation peptide. Residues 8-21 (IVGGYECPKHXVPW) form the Peptidase S1 domain.

This sequence belongs to the peptidase S1 family.

Its subcellular location is the secreted. The protein localises to the extracellular space. The catalysed reaction is Preferential cleavage: Arg-|-Xaa, Lys-|-Xaa.. The sequence is that of Trypsin from Protopterus aethiopicus (Marbled lungfish).